Reading from the N-terminus, the 283-residue chain is Pantothenate synthetase (283 aa).

Residue 30-37 (MGNLHDGH) participates in ATP binding. The active-site Proton donor is the histidine 37. Glutamine 61 provides a ligand contact to (R)-pantoate. Glutamine 61 is a beta-alanine binding site. Residue 149–152 (GEKD) participates in ATP binding. Glutamine 155 serves as a coordination point for (R)-pantoate. 186–189 (LSSR) serves as a coordination point for ATP.

It belongs to the pantothenate synthetase family. Homodimer.

Its subcellular location is the cytoplasm. It carries out the reaction (R)-pantoate + beta-alanine + ATP = (R)-pantothenate + AMP + diphosphate + H(+). Its pathway is cofactor biosynthesis; (R)-pantothenate biosynthesis; (R)-pantothenate from (R)-pantoate and beta-alanine: step 1/1. Functionally, catalyzes the condensation of pantoate with beta-alanine in an ATP-dependent reaction via a pantoyl-adenylate intermediate. The protein is Pantothenate synthetase of Escherichia coli O6:K15:H31 (strain 536 / UPEC).